Consider the following 209-residue polypeptide: Kynurenine formamidase (209 aa).

A substrate-binding site is contributed by Trp20. The Zn(2+) site is built by His50, His54, and Asp56. His60 serves as the catalytic Proton donor/acceptor. Positions 161 and 173 each coordinate Zn(2+).

Belongs to the Cyclase 1 superfamily. KynB family. As to quaternary structure, homodimer. The cofactor is Zn(2+).

The enzyme catalyses N-formyl-L-kynurenine + H2O = L-kynurenine + formate + H(+). It functions in the pathway amino-acid degradation; L-tryptophan degradation via kynurenine pathway; L-kynurenine from L-tryptophan: step 2/2. In terms of biological role, catalyzes the hydrolysis of N-formyl-L-kynurenine to L-kynurenine, the second step in the kynurenine pathway of tryptophan degradation. In Bacillus cereus (strain ATCC 14579 / DSM 31 / CCUG 7414 / JCM 2152 / NBRC 15305 / NCIMB 9373 / NCTC 2599 / NRRL B-3711), this protein is Kynurenine formamidase.